The chain runs to 432 residues: Mannan endo-1,4-beta-mannosidase 1 (432 aa).

An N-terminal signal peptide occupies residues 1-28 (MRLLGAHRAALLVLACVVVVVIHGLGEA). 2 residues coordinate substrate: tryptophan 93 and asparagine 209. The Proton donor role is filled by glutamate 210. Tyrosine 289 contacts substrate. Glutamate 329 functions as the Nucleophile in the catalytic mechanism. Tryptophan 371 contributes to the substrate binding site.

It belongs to the glycosyl hydrolase 5 (cellulase A) family. In terms of tissue distribution, ubiquitous.

It localises to the secreted. The catalysed reaction is Random hydrolysis of (1-&gt;4)-beta-D-mannosidic linkages in mannans, galactomannans and glucomannans.. The chain is Mannan endo-1,4-beta-mannosidase 1 (MAN1) from Oryza sativa subsp. japonica (Rice).